Consider the following 445-residue polypeptide: Trigger factor (445 aa).

In terms of domain architecture, PPIase FKBP-type spans 162-247 (GDQVTIDAIG…IKAVHTAEPT (86 aa)).

It belongs to the FKBP-type PPIase family. Tig subfamily.

It localises to the cytoplasm. The catalysed reaction is [protein]-peptidylproline (omega=180) = [protein]-peptidylproline (omega=0). In terms of biological role, involved in protein export. Acts as a chaperone by maintaining the newly synthesized protein in an open conformation. Functions as a peptidyl-prolyl cis-trans isomerase. This Rickettsia africae (strain ESF-5) protein is Trigger factor.